We begin with the raw amino-acid sequence, 838 residues long: Protein P (838 aa).

A terminal protein domain (TP) region spans residues 1–177; the sequence is MPLSYQHFRK…FCGSPYSWEQ (177 aa). Residues 178–341 form a spacer region; that stretch reads ELQHQTSTRH…YCLTHIVNLL (164 aa). Disordered stretches follow at residues 215–238 and 285–311; these read QSRL…SGSI and STSK…RSQS. Polar residues predominate over residues 285–294; sequence STSKRQSSSG. The segment at 342–685 is polymerase/reverse transcriptase domain (RT); that stretch reads EDWGPCTEHG…YLHLYPVARQ (344 aa). The region spanning 352–595 is the Reverse transcriptase domain; it reads EHNIRIPRTP…YSLNFMGYVI (244 aa). Asp-424, Asp-546, and Asp-547 together coordinate Mg(2+).

This sequence belongs to the hepadnaviridae P protein family.

It catalyses the reaction DNA(n) + a 2'-deoxyribonucleoside 5'-triphosphate = DNA(n+1) + diphosphate. The enzyme catalyses Endonucleolytic cleavage to 5'-phosphomonoester.. Its activity is regulated as follows. Activated by host HSP70 and HSP40 in vitro to be able to bind the epsilon loop of the pgRNA. Because deletion of the RNase H region renders the protein partly chaperone-independent, the chaperones may be needed indirectly to relieve occlusion of the RNA-binding site by this domain. Inhibited by several reverse-transcriptase inhibitors: Lamivudine, Adefovir and Entecavir. Its function is as follows. Multifunctional enzyme that converts the viral RNA genome into dsDNA in viral cytoplasmic capsids. This enzyme displays a DNA polymerase activity that can copy either DNA or RNA templates, and a ribonuclease H (RNase H) activity that cleaves the RNA strand of RNA-DNA heteroduplexes in a partially processive 3'- to 5'-endonucleasic mode. Neo-synthesized pregenomic RNA (pgRNA) are encapsidated together with the P protein, and reverse-transcribed inside the nucleocapsid. Initiation of reverse-transcription occurs first by binding the epsilon loop on the pgRNA genome, and is initiated by protein priming, thereby the 5'-end of (-)DNA is covalently linked to P protein. Partial (+)DNA is synthesized from the (-)DNA template and generates the relaxed circular DNA (RC-DNA) genome. After budding and infection, the RC-DNA migrates in the nucleus, and is converted into a plasmid-like covalently closed circular DNA (cccDNA). The activity of P protein does not seem to be necessary for cccDNA generation, and is presumably released from (+)DNA by host nuclear DNA repair machinery. In Homo sapiens (Human), this protein is Protein P.